A 122-amino-acid polypeptide reads, in one-letter code: Large ribosomal subunit protein uL18 (122 aa).

It belongs to the universal ribosomal protein uL18 family. In terms of assembly, part of the 50S ribosomal subunit; part of the 5S rRNA/L5/L18/L25 subcomplex. Contacts the 5S and 23S rRNAs.

In terms of biological role, this is one of the proteins that bind and probably mediate the attachment of the 5S RNA into the large ribosomal subunit, where it forms part of the central protuberance. The protein is Large ribosomal subunit protein uL18 of Mycobacterium tuberculosis (strain ATCC 25177 / H37Ra).